We begin with the raw amino-acid sequence, 237 residues long: Dihydroceramide fatty acyl 2-hydroxylase FAH1 (237 aa).

A run of 2 helical transmembrane segments spans residues 50–70 (LTLTVWWAVPVIWLPVVVWCI) and 80–100 (LPEIVPIVVMGIFIWTFFEYV). Zn(2+) contacts are provided by histidine 102, histidine 107, histidine 123, histidine 126, and histidine 127. Helical transmembrane passes span 137–157 (VFPPTATAILCFPFWNIAKAI) and 164–184 (PALFGGGMLGYVMYDVTHYYL). Zn(2+) is bound by residues histidine 181, histidine 185, histidine 201, histidine 204, and histidine 205.

This sequence belongs to the sterol desaturase family. As to quaternary structure, interacts with CYTB5-A, CYTB5-B, CYTB5-C and CYTB5-D. Interacts indirectly with BI-1 via CYTB5-D. It depends on Zn(2+) as a cofactor. As to expression, expressed in leaves, roots, flowers and seeds.

It localises to the endoplasmic reticulum membrane. It carries out the reaction an N-(1,2-saturated acyl)sphinganine + 2 Fe(II)-[cytochrome b5] + O2 + 2 H(+) = an N-[(2'R)-hydroxyacyl]sphinganine + 2 Fe(III)-[cytochrome b5] + H2O. Fatty acid 2-hydroxylase involved in the alpha-hydroxylation of sphingolipid-associated very long-chain fatty acids (VLCFA). Probably involved in the resistance response to oxidative stress. This Arabidopsis thaliana (Mouse-ear cress) protein is Dihydroceramide fatty acyl 2-hydroxylase FAH1.